The chain runs to 275 residues: Large ribosomal subunit protein uL2 (275 aa).

Residues 223–275 form a disordered region; that stretch reads VAMNPVDHPHGGGEGRTGEAREPVSPWGTPSKGFKTRRNKRTNNMIVQRRKRK. A compositionally biased stretch (basic and acidic residues) spans 229-244; sequence DHPHGGGEGRTGEARE.

The protein belongs to the universal ribosomal protein uL2 family. As to quaternary structure, part of the 50S ribosomal subunit. Forms a bridge to the 30S subunit in the 70S ribosome.

One of the primary rRNA binding proteins. Required for association of the 30S and 50S subunits to form the 70S ribosome, for tRNA binding and peptide bond formation. It has been suggested to have peptidyltransferase activity; this is somewhat controversial. Makes several contacts with the 16S rRNA in the 70S ribosome. This Bordetella petrii (strain ATCC BAA-461 / DSM 12804 / CCUG 43448) protein is Large ribosomal subunit protein uL2.